The primary structure comprises 100 residues: Large ribosomal subunit protein uL23 (100 aa).

This sequence belongs to the universal ribosomal protein uL23 family. Part of the 50S ribosomal subunit. Contacts protein L29, and trigger factor when it is bound to the ribosome.

In terms of biological role, one of the early assembly proteins it binds 23S rRNA. One of the proteins that surrounds the polypeptide exit tunnel on the outside of the ribosome. Forms the main docking site for trigger factor binding to the ribosome. The polypeptide is Large ribosomal subunit protein uL23 (Pseudothermotoga lettingae (strain ATCC BAA-301 / DSM 14385 / NBRC 107922 / TMO) (Thermotoga lettingae)).